A 76-amino-acid chain; its full sequence is Putative protein StbC (76 aa).

The protein is Putative protein StbC (stbC) of Escherichia coli.